Reading from the N-terminus, the 250-residue chain is UPF0736 protein BLi01230/BL03322 (250 aa).

This sequence belongs to the UPF0736 family.

This chain is UPF0736 protein BLi01230/BL03322, found in Bacillus licheniformis (strain ATCC 14580 / DSM 13 / JCM 2505 / CCUG 7422 / NBRC 12200 / NCIMB 9375 / NCTC 10341 / NRRL NRS-1264 / Gibson 46).